A 330-amino-acid chain; its full sequence is Ketol-acid reductoisomerase (NADP(+)) (330 aa).

The region spanning 2-182 is the KARI N-terminal Rossmann domain; it reads ARMYYDADAN…GGTRAGILET (181 aa). NADP(+)-binding positions include 25–28, Ser-51, Ser-53, and 83–86; these read YGSQ and DEFQ. His-108 is a catalytic residue. Gly-134 lines the NADP(+) pocket. The 146-residue stretch at 183–328 folds into the KARI C-terminal knotted domain; that stretch reads SFREETETDL…KDLRAMFSWL (146 aa). Mg(2+) is bound by residues Asp-191, Glu-195, Glu-227, and Glu-231. Residue Ser-252 coordinates substrate.

The protein belongs to the ketol-acid reductoisomerase family. Mg(2+) is required as a cofactor.

The catalysed reaction is (2R)-2,3-dihydroxy-3-methylbutanoate + NADP(+) = (2S)-2-acetolactate + NADPH + H(+). The enzyme catalyses (2R,3R)-2,3-dihydroxy-3-methylpentanoate + NADP(+) = (S)-2-ethyl-2-hydroxy-3-oxobutanoate + NADPH + H(+). It functions in the pathway amino-acid biosynthesis; L-isoleucine biosynthesis; L-isoleucine from 2-oxobutanoate: step 2/4. It participates in amino-acid biosynthesis; L-valine biosynthesis; L-valine from pyruvate: step 2/4. Involved in the biosynthesis of branched-chain amino acids (BCAA). Catalyzes an alkyl-migration followed by a ketol-acid reduction of (S)-2-acetolactate (S2AL) to yield (R)-2,3-dihydroxy-isovalerate. In the isomerase reaction, S2AL is rearranged via a Mg-dependent methyl migration to produce 3-hydroxy-3-methyl-2-ketobutyrate (HMKB). In the reductase reaction, this 2-ketoacid undergoes a metal-dependent reduction by NADPH to yield (R)-2,3-dihydroxy-isovalerate. This Synechococcus sp. (strain ATCC 27144 / PCC 6301 / SAUG 1402/1) (Anacystis nidulans) protein is Ketol-acid reductoisomerase (NADP(+)).